Here is a 392-residue protein sequence, read N- to C-terminus: Methylthioribose-1-phosphate isomerase (392 aa).

Aspartate 253 serves as the catalytic Proton donor.

The protein belongs to the eIF-2B alpha/beta/delta subunits family. MtnA subfamily.

The protein resides in the cytoplasm. Its subcellular location is the nucleus. The enzyme catalyses 5-(methylsulfanyl)-alpha-D-ribose 1-phosphate = 5-(methylsulfanyl)-D-ribulose 1-phosphate. It functions in the pathway amino-acid biosynthesis; L-methionine biosynthesis via salvage pathway; L-methionine from S-methyl-5-thio-alpha-D-ribose 1-phosphate: step 1/6. Functionally, catalyzes the interconversion of methylthioribose-1-phosphate (MTR-1-P) into methylthioribulose-1-phosphate (MTRu-1-P). This is Methylthioribose-1-phosphate isomerase (mri1) from Pyrenophora tritici-repentis (strain Pt-1C-BFP) (Wheat tan spot fungus).